We begin with the raw amino-acid sequence, 121 residues long: Large ribosomal subunit protein bL20 (121 aa).

This sequence belongs to the bacterial ribosomal protein bL20 family.

Functionally, binds directly to 23S ribosomal RNA and is necessary for the in vitro assembly process of the 50S ribosomal subunit. It is not involved in the protein synthesizing functions of that subunit. The protein is Large ribosomal subunit protein bL20 of Roseobacter denitrificans (strain ATCC 33942 / OCh 114) (Erythrobacter sp. (strain OCh 114)).